The following is a 596-amino-acid chain: Elongation factor 4 (596 aa).

The tr-type G domain occupies 2-184 (KHIRNFSIIA…EIIAKIPPPV (183 aa)). Residues 14-19 (DHGKST) and 131-134 (NKID) each bind GTP.

Belongs to the TRAFAC class translation factor GTPase superfamily. Classic translation factor GTPase family. LepA subfamily.

The protein resides in the cell inner membrane. It catalyses the reaction GTP + H2O = GDP + phosphate + H(+). Its function is as follows. Required for accurate and efficient protein synthesis under certain stress conditions. May act as a fidelity factor of the translation reaction, by catalyzing a one-codon backward translocation of tRNAs on improperly translocated ribosomes. Back-translocation proceeds from a post-translocation (POST) complex to a pre-translocation (PRE) complex, thus giving elongation factor G a second chance to translocate the tRNAs correctly. Binds to ribosomes in a GTP-dependent manner. This chain is Elongation factor 4, found in Shewanella frigidimarina (strain NCIMB 400).